The following is an 82-amino-acid chain: Small ribosomal subunit protein bS16 (82 aa).

The protein belongs to the bacterial ribosomal protein bS16 family.

This is Small ribosomal subunit protein bS16 from Actinobacillus pleuropneumoniae serotype 5b (strain L20).